The primary structure comprises 442 residues: MENAKMNSLIAQYPLVKDLVALKETTWFNPGTTSLAEGLPYVGLTEQDVQDAHARLSRFAPYLAKAFPETAATGGIIESELVAIPAMQKRLEKEYQQPISGQLLLKKDSHLPISGSIKARGGIYEVLAHAEKLALEAGLLTLDDDYSKLLSPEFKQFFSQYSIAVGSTGNLGLSIGIMSARIGFKVTVHMSADARAWKKAKLRSHGVTVVEYEQDYGVAVEEGRKAAQSDPNCFFIDDENSRTLFLGYSVAGQRLKAQFAQQGSIVDADNPLFVYLPCGVGGGPGGVAFGLKLAFGDHVHCFFAEPTHSPCMLLGVHTGLHDQISVQDIGIDNLTAADGLAVGRASGFVGRAMERLLDGFYTLSDQTMYDMLGWLAQEEGIRLEPSALAGMAGPQRVCASVSYQQMHGFSAEQLRNTTHLVWATGGGMVPEEEMNQYLAKGR.

The residue at position 118 (K118) is an N6-(pyridoxal phosphate)lysine.

This sequence belongs to the serine/threonine dehydratase family. DsdA subfamily. In terms of assembly, monomer. It depends on pyridoxal 5'-phosphate as a cofactor.

It catalyses the reaction D-serine = pyruvate + NH4(+). This chain is D-serine dehydratase, found in Escherichia coli (strain 55989 / EAEC).